Reading from the N-terminus, the 249-residue chain is Triosephosphate isomerase (249 aa).

9–11 (NWK) lines the substrate pocket. Histidine 95 acts as the Electrophile in catalysis. Glutamate 166 acts as the Proton acceptor in catalysis. Residues glycine 172, serine 211, and 232–233 (GG) contribute to the substrate site.

This sequence belongs to the triosephosphate isomerase family. In terms of assembly, homodimer.

It localises to the cytoplasm. It carries out the reaction D-glyceraldehyde 3-phosphate = dihydroxyacetone phosphate. It functions in the pathway carbohydrate biosynthesis; gluconeogenesis. The protein operates within carbohydrate degradation; glycolysis; D-glyceraldehyde 3-phosphate from glycerone phosphate: step 1/1. Functionally, involved in the gluconeogenesis. Catalyzes stereospecifically the conversion of dihydroxyacetone phosphate (DHAP) to D-glyceraldehyde-3-phosphate (G3P). This Legionella pneumophila (strain Paris) protein is Triosephosphate isomerase.